Reading from the N-terminus, the 1096-residue chain is Constitutive coactivator of PPAR-gamma-like protein 2 (1096 aa).

The span at 35 to 59 shows a compositional bias: low complexity; the sequence is QQQHLHRQLPPTAALAPGAPRAARG. 3 disordered regions span residues 35 to 113, 508 to 579, and 971 to 1096; these read QQQH…PPQL, NYLP…DGEP, and SRSS…RKED. Position 58 is an omega-N-methylarginine (Arg-58). Positions 82 to 95 are enriched in basic residues; it reads TRHHHPAHHFHHHG. Residues 101–113 show a composition bias toward pro residues; the sequence is LHPPLPPPPPPQL. The span at 540-559 shows a compositional bias: basic and acidic residues; that stretch reads HITEAFHHQPEWGNPNRDRG. An Omega-N-methylarginine modification is found at Arg-977. 2 stretches are compositionally biased toward basic and acidic residues: residues 1041 to 1050 and 1076 to 1096; these read IKEEKSDHRL and NREK…RKED. A Glycyl lysine isopeptide (Lys-Gly) (interchain with G-Cter in SUMO2) cross-link involves residue Lys-1042.

This sequence belongs to the constitutive coactivator of PPAR-gamma family. As to expression, expressed at low levels in a number of tissues.

The sequence is that of Constitutive coactivator of PPAR-gamma-like protein 2 (FAM120C) from Homo sapiens (Human).